The sequence spans 679 residues: Single-strand DNA endonuclease ASTE1 (679 aa).

An interaction with SHLD2 region spans residues 351-400 (TILPTQVENMQQPNAHRISQPIRQIIYGLLLNASPHLDKTSWNALPPQPL). Positions 625–645 (RSNSKKKRQKKQNTSCSKNRG) are disordered. A compositionally biased stretch (basic residues) spans 626 to 635 (SNSKKKRQKK).

The protein belongs to the asteroid family. In terms of assembly, interacts with SHLD1, SHLD2, SHLD3, RIF1 and MAD2L2/REV7.

Its function is as follows. Structure-specific DNA endonuclease that specifically cleaves single-stranded DNA and 3' overhang DNA. Contributes to the control of DNA double-strand break repair choice by antagonizing BRCA1-dependent homologous recombination (HR) and promoting non-homologous end-joining (NHEJ). Recruited to the single-stranded DNA ends by SHLD2 and cleaves the 3' exposed DNA ends, therefore inhibiting DNA end resection (necessary for HR) and promoting DNA end protection (necessary for NHEJ). This Homo sapiens (Human) protein is Single-strand DNA endonuclease ASTE1 (ASTE1).